The following is a 315-amino-acid chain: MPFCQVVVGPPGSGKSTYCFGMYQLLSAIGRSSIIVNLDPANDFIKYPCAIDIRKVLDVEMIQKDYDLGPNGALIYAMEAIEYHVEWLLKELKKHRDSYVIFDCPGQVELFTNHNSLQKIIKTLEKELDYRPVSVQLVDAYCCTNPSAYVSALLVCLKGMLQLDMPHVNILSKADLLCTYGTLPMKLDFFTEVQDLSYLAPLLDRDKRLQRYSDLNKAICELVEDFNLVSFEVVAVENKASMLRVLRKIDQAGGYAYGSTEIGGDAVWVNAVRQGGDPLQGISPQERWIDKKEEYDKYEWELEQKSTMDEDENEG.

12 to 17 (GSGKST) contacts GTP. Positions 69–71 (GPN) match the Gly-Pro-Asn (GPN)-loop; involved in dimer interface motif. 172 to 175 (SKAD) serves as a coordination point for GTP.

Belongs to the GPN-loop GTPase family. Heterodimers with gpn1 or fet5/gpn3. Binds to RNA polymerase II (RNAPII).

Its subcellular location is the cytoplasm. It is found in the nucleus. Small GTPase required for proper nuclear import of RNA polymerase II and III (RNAPII and RNAPIII). May act at an RNAP assembly step prior to nuclear import. This is GPN-loop GTPase 2 from Schizosaccharomyces pombe (strain 972 / ATCC 24843) (Fission yeast).